The chain runs to 320 residues: ATP-dependent 6-phosphofructokinase (320 aa).

Gly12 contacts ATP. ADP contacts are provided by residues 22–26 and 55–60; these read RSVVR and RYSVSD. ATP contacts are provided by residues 73–74 and 103–106; these read RF and GDGS. Residue Asp104 participates in Mg(2+) binding. Residue 126–128 coordinates substrate; the sequence is TID. The active-site Proton acceptor is Asp128. An ADP-binding site is contributed by Arg155. Residues Arg163 and 170–172 each bind substrate; that span reads MGR. ADP is bound by residues 186-188 and 214-216; these read GCE and KKH. Substrate contacts are provided by residues Glu223, Arg244, and 250-253; that span reads HIQR.

This sequence belongs to the phosphofructokinase type A (PFKA) family. ATP-dependent PFK group I subfamily. Prokaryotic clade 'B1' sub-subfamily. Homotetramer. Mg(2+) is required as a cofactor.

It localises to the cytoplasm. The catalysed reaction is beta-D-fructose 6-phosphate + ATP = beta-D-fructose 1,6-bisphosphate + ADP + H(+). It participates in carbohydrate degradation; glycolysis; D-glyceraldehyde 3-phosphate and glycerone phosphate from D-glucose: step 3/4. With respect to regulation, allosterically activated by ADP and other diphosphonucleosides, and allosterically inhibited by phosphoenolpyruvate. Catalyzes the phosphorylation of D-fructose 6-phosphate to fructose 1,6-bisphosphate by ATP, the first committing step of glycolysis. The sequence is that of ATP-dependent 6-phosphofructokinase from Baumannia cicadellinicola subsp. Homalodisca coagulata.